The following is a 31-amino-acid chain: Cytochrome b6-f complex subunit 6 (31 aa).

Residues 4–24 (ITSYFGFLLAALTITSVLFIG) form a helical membrane-spanning segment.

It belongs to the PetL family. In terms of assembly, the 4 large subunits of the cytochrome b6-f complex are cytochrome b6, subunit IV (17 kDa polypeptide, PetD), cytochrome f and the Rieske protein, while the 4 small subunits are PetG, PetL, PetM and PetN. The complex functions as a dimer.

It localises to the plastid. It is found in the chloroplast thylakoid membrane. In terms of biological role, component of the cytochrome b6-f complex, which mediates electron transfer between photosystem II (PSII) and photosystem I (PSI), cyclic electron flow around PSI, and state transitions. PetL is important for photoautotrophic growth as well as for electron transfer efficiency and stability of the cytochrome b6-f complex. The polypeptide is Cytochrome b6-f complex subunit 6 (Lepidium virginicum (Virginia pepperweed)).